Consider the following 325-residue polypeptide: Post-GPI attachment to proteins factor 2-like (325 aa).

The next 6 membrane-spanning stretches (helical) occupy residues 80-100, 130-150, 171-191, 205-225, 243-263, and 276-296; these read VVTALLPLVTLFTCFVTAYVF, YFWRFSIALHIGPRIPIAFVY, LLITLILVLNCIEIASLGGVT, IFITFMVCSLCYMLATIKLNG, WKKILFAVSILSTVGLLVFFA, and WFAFFEYLIAIANMLFHFTII.

The protein belongs to the PGAP2 family.

Its subcellular location is the membrane. This chain is Post-GPI attachment to proteins factor 2-like, found in Drosophila melanogaster (Fruit fly).